The chain runs to 220 residues: Claudin-3 (220 aa).

At 1 to 8 (MSMGLEIT) the chain is on the cytoplasmic side. A helical transmembrane segment spans residues 9-29 (GTALAVLGWLGTIVCCALPMW). The Extracellular segment spans residues 30-80 (RVSAFIGSNIITSQNIWEGLWMNCVVQSTGQMQCKVYDSLLALPQDLQAAR). Residues 81–101 (ALIVVAILLAAFGLLVALVGA) form a helical membrane-spanning segment. Over 102–115 (QCTNCVQDDTAKAK) the chain is Cytoplasmic. Residues 116-136 (ITIVAGVLFLLAALLTLVPVS) traverse the membrane as a helical segment. Residues 137-159 (WSANTIIRDFYNPVVPEAQKREM) lie on the Extracellular side of the membrane. Residues 160 to 180 (GAGLYVGWAAAALQLLGGALL) form a helical membrane-spanning segment. The Cytoplasmic segment spans residues 181-220 (CCSCPPREKKYTATKVVYSAPRSTGPGASLGTGYDRKDYV). Tyr198 is modified (phosphotyrosine). Phosphoserine occurs at positions 199 and 209. The interactions with TJP1, TJP2 and TJP3 stretch occupies residues 219-220 (YV).

Belongs to the claudin family. In terms of assembly, can form homo- and heteropolymers with other CLDN. Homopolymers interact with CLDN1 and CLDN2 homopolymers. Interacts in cis (within the same plasma membrane) with CLDN19. Directly interacts with TJP1/ZO-1, TJP2/ZO-2 and TJP3/ZO-3.

The protein resides in the cell junction. Its subcellular location is the tight junction. The protein localises to the cell membrane. Functionally, barrier-forming claudin. Plays a major role in tight junction-specific obliteration of the intercellular space, through calcium-independent cell-adhesion activity. This chain is Claudin-3 (CLDN3), found in Homo sapiens (Human).